Here is a 567-residue protein sequence, read N- to C-terminus: MGQSSSISSSNEEGSSHSKKFTNSKDILAYFNNKAQQQVTIPELVSFKGNLQIEDLNTPISHKALCNSLYFPQNHAMIVGIVTNMLRVLSNFPLMKSSYEPITGYGLLKCILLLNRARCAKFLKTKSYDQLKLLFISLSLQKTDKEELSEESENDGNKELTIKQIITGFDDVDTEMLCIPADFMLQFLTWLLILTVDCPTTNSKLDNTETHDQWGNFKVSALNLLRTMNPDVVGDIESHSITFQQFSTAIRTVMPNLLKPLENLMEHFFYLQHDLVDHDTNLSSIQDSKVMTPALLAQLSTGLPKELFIHKLQSLYIGRKSGFSMRSLQAKVFKWMAPSILVVSGMRITNSEEYAAEKNPRYRHFLEEFPKLKESDQMMDASHLNKRKTTFAVYIDDPWKVTNKDYFGDLNTRIIEISPRQDIYKVNQKGTIYFNTIGGGIGIGDKQPLIKPASKRYIPGNVSLTFDSTLEFAVFRNTGYGGSLDPGLLSMERKEENSPYELHFLIQDVEVWGCGGEKELEEQIKQLEWEEAESKRRQQINLRSLGEDRALLEMAGLVGQHQGGGSM.

Positions 289 to 515 constitute a TLDc domain; the sequence is KVMTPALLAQ…IQDVEVWGCG (227 aa).

This sequence belongs to the RTC5 family.

The protein resides in the cytoplasm. Functionally, may be involved in a process influencing telomere capping. The protein is Restriction of telomere capping protein 5 (RTC5) of Saccharomyces cerevisiae (strain RM11-1a) (Baker's yeast).